The chain runs to 689 residues: Elongation factor G (689 aa).

Residues 8 to 282 (LNTRNIGIMA…AVVDYLPSPI (275 aa)) enclose the tr-type G domain. GTP contacts are provided by residues 17 to 24 (AHIDAGKT), 81 to 85 (DTPGH), and 135 to 138 (NKMD).

The protein belongs to the TRAFAC class translation factor GTPase superfamily. Classic translation factor GTPase family. EF-G/EF-2 subfamily.

Its subcellular location is the cytoplasm. Its function is as follows. Catalyzes the GTP-dependent ribosomal translocation step during translation elongation. During this step, the ribosome changes from the pre-translocational (PRE) to the post-translocational (POST) state as the newly formed A-site-bound peptidyl-tRNA and P-site-bound deacylated tRNA move to the P and E sites, respectively. Catalyzes the coordinated movement of the two tRNA molecules, the mRNA and conformational changes in the ribosome. This is Elongation factor G from Mycoplasma capricolum subsp. capricolum (strain California kid / ATCC 27343 / NCTC 10154).